Reading from the N-terminus, the 502-residue chain is Cardiolipin synthase (502 aa).

3 helical membrane-spanning segments follow: residues 7-27, 29-49, and 59-79; these read VIIF…YWEG, LLGG…FVIS, and ITWL…YLMF. 2 PLD phosphodiesterase domains span residues 237–264 and 415–442; these read INFR…GDEY and SKGF…DMRS. Catalysis depends on residues histidine 242, lysine 244, aspartate 249, histidine 420, lysine 422, and aspartate 427.

It belongs to the phospholipase D family. Cardiolipin synthase subfamily.

It localises to the cell membrane. It carries out the reaction 2 a 1,2-diacyl-sn-glycero-3-phospho-(1'-sn-glycerol) = a cardiolipin + glycerol. In terms of biological role, catalyzes the reversible phosphatidyl group transfer from one phosphatidylglycerol molecule to another to form cardiolipin (CL) (diphosphatidylglycerol) and glycerol. This is Cardiolipin synthase (cls) from Geobacillus sp. (strain WCH70).